The sequence spans 291 residues: Formamidopyrimidine-DNA glycosylase (291 aa).

The active-site Schiff-base intermediate with DNA is Pro-2. Glu-3 (proton donor) is an active-site residue. The active-site Proton donor; for beta-elimination activity is the Lys-61. DNA is bound by residues His-103, Arg-123, and Arg-165. The FPG-type zinc finger occupies 251 to 285 (EVYGRGGQACSRCASTIRRDAFMNRSSFSCPACQP). Arg-275 (proton donor; for delta-elimination activity) is an active-site residue.

This sequence belongs to the FPG family. In terms of assembly, monomer. Requires Zn(2+) as cofactor.

It catalyses the reaction Hydrolysis of DNA containing ring-opened 7-methylguanine residues, releasing 2,6-diamino-4-hydroxy-5-(N-methyl)formamidopyrimidine.. The enzyme catalyses 2'-deoxyribonucleotide-(2'-deoxyribose 5'-phosphate)-2'-deoxyribonucleotide-DNA = a 3'-end 2'-deoxyribonucleotide-(2,3-dehydro-2,3-deoxyribose 5'-phosphate)-DNA + a 5'-end 5'-phospho-2'-deoxyribonucleoside-DNA + H(+). In terms of biological role, involved in base excision repair of DNA damaged by oxidation or by mutagenic agents. Acts as a DNA glycosylase that recognizes and removes damaged bases. Has a preference for oxidized purines, such as 7,8-dihydro-8-oxoguanine (8-oxoG). Has AP (apurinic/apyrimidinic) lyase activity and introduces nicks in the DNA strand. Cleaves the DNA backbone by beta-delta elimination to generate a single-strand break at the site of the removed base with both 3'- and 5'-phosphates. This chain is Formamidopyrimidine-DNA glycosylase, found in Parafrankia sp. (strain EAN1pec).